The primary structure comprises 57 residues: Large ribosomal subunit protein bL32 (57 aa).

Residues 1–19 (MAVPKRRMSRSNTRSRRSQ) are compositionally biased toward basic residues. The disordered stretch occupies residues 1–22 (MAVPKRRMSRSNTRSRRSQWKA).

The protein belongs to the bacterial ribosomal protein bL32 family.

The chain is Large ribosomal subunit protein bL32 from Rhodococcus jostii (strain RHA1).